The sequence spans 205 residues: Ribonuclease HII (205 aa).

The RNase H type-2 domain maps to R22–R205. Residues D28, E29, and D120 each coordinate a divalent metal cation.

Belongs to the RNase HII family. It depends on Mn(2+) as a cofactor. The cofactor is Mg(2+).

It is found in the cytoplasm. It catalyses the reaction Endonucleolytic cleavage to 5'-phosphomonoester.. Functionally, endonuclease that specifically degrades the RNA of RNA-DNA hybrids. The sequence is that of Ribonuclease HII from Caldicellulosiruptor saccharolyticus (strain ATCC 43494 / DSM 8903 / Tp8T 6331).